The sequence spans 267 residues: Glutamate racemase (267 aa).

Substrate is bound by residues 13–14 and 45–46; these read DS and YS. C77 acts as the Proton donor/acceptor in catalysis. 78–79 lines the substrate pocket; that stretch reads NT. The active-site Proton donor/acceptor is C188. 189 to 190 lines the substrate pocket; the sequence is TH.

The protein belongs to the aspartate/glutamate racemases family.

The enzyme catalyses L-glutamate = D-glutamate. Its pathway is cell wall biogenesis; peptidoglycan biosynthesis. In terms of biological role, provides the (R)-glutamate required for cell wall biosynthesis. This is Glutamate racemase from Histophilus somni (strain 129Pt) (Haemophilus somnus).